Reading from the N-terminus, the 345-residue chain is D-fructose 1,6-bisphosphatase class 2/sedoheptulose 1,7-bisphosphatase (345 aa).

Mn(2+) is bound by residues aspartate 33, glutamate 57, aspartate 97, and glutamate 100. Substrate-binding positions include 100–102 (EGT), tyrosine 131, 176–178 (RDR), and 198–200 (DGD). Glutamate 225 contributes to the Mn(2+) binding site.

It belongs to the FBPase class 2 family. Homotetramer. It depends on Mn(2+) as a cofactor.

It carries out the reaction beta-D-fructose 1,6-bisphosphate + H2O = beta-D-fructose 6-phosphate + phosphate. The catalysed reaction is D-sedoheptulose 1,7-bisphosphate + H2O = D-sedoheptulose 7-phosphate + phosphate. The protein operates within carbohydrate biosynthesis; Calvin cycle. Catalyzes the hydrolysis of fructose 1,6-bisphosphate (Fru 1,6-P2) and sedoheptulose 1,7-bisphosphate (Sed 1,7-P2) to fructose 6-phosphate and sedoheptulose 7-phosphate, respectively. The sequence is that of D-fructose 1,6-bisphosphatase class 2/sedoheptulose 1,7-bisphosphatase from Trichormus variabilis (strain ATCC 29413 / PCC 7937) (Anabaena variabilis).